Reading from the N-terminus, the 92-residue chain is Defensin-like protein 249 (92 aa).

An N-terminal signal peptide occupies residues 1-24 (MKLAAIFLASSVLLSLLPIHLSQG). Cystine bridges form between Cys-34-Cys-91, Cys-45-Cys-74, Cys-53-Cys-84, and Cys-72-Cys-86.

It belongs to the DEFL family.

The protein resides in the secreted. This Arabidopsis thaliana (Mouse-ear cress) protein is Defensin-like protein 249 (SCRL7).